A 451-amino-acid polypeptide reads, in one-letter code: Tubulin alpha-1B chain (451 aa).

The MREC motif signature appears at 1-4 (MREC). Positions 10, 11, 12, and 15 each coordinate GTP. N6,N6,N6-trimethyllysine; alternate is present on Lys40. Lys40 carries the N6-acetyllysine; alternate modification. Ser48 carries the post-translational modification Phosphoserine. GTP contacts are provided by Glu71, Ala99, Ser140, Gly143, Gly144, Thr145, Gly146, Thr179, Glu183, Asn206, Tyr224, and Asn228. Mg(2+) is bound at residue Glu71. Phosphoserine is present on Ser232. Leu252 lines the GTP pocket. Glu254 is a catalytic residue. Tyr282 bears the 3'-nitrotyrosine mark. Lys326 participates in a covalent cross-link: Glycyl lysine isopeptide (Lys-Gly) (interchain with G-Cter in ubiquitin). The residue at position 339 (Arg339) is an Omega-N-methylarginine. Lys370 participates in a covalent cross-link: Glycyl lysine isopeptide (Lys-Gly) (interchain with G-Cter in ubiquitin). Positions 432–451 (YEEVGVDSVEGEGEEEGEEY) are disordered. Ser439 is subject to Phosphoserine. Residues Glu443 and Glu445 each carry the 5-glutamyl polyglutamate modification. Tyr451 bears the 3'-nitrotyrosine mark.

It belongs to the tubulin family. As to quaternary structure, heterodimer of alpha- and beta-tubulin. A typical microtubule is a hollow water-filled tube with an outer diameter of 25 nm and an inner diameter of 15 nM. Alpha-beta heterodimers associate head-to-tail to form protofilaments running lengthwise along the microtubule wall with the beta-tubulin subunit facing the microtubule plus end conferring a structural polarity. Microtubules usually have 13 protofilaments but different protofilament numbers can be found in some organisms and specialized cells. Interacts with gamma-tubulin; the interaction allows microtubules to nucleate from the gamma-tubulin ring complex (gTuRC). Nascent microtubule interacts (via alpha-tubulin MREC motif) with TTC5/STRAP; this interaction may result in tubulin mRNA-targeted degradation. Component of sperm flagellar doublet microtubules. The cofactor is Mg(2+). In terms of processing, some glutamate residues at the C-terminus are polyglutamylated, resulting in polyglutamate chains on the gamma-carboxyl group. Polyglutamylation plays a key role in microtubule severing by spastin (SPAST). SPAST preferentially recognizes and acts on microtubules decorated with short polyglutamate tails: severing activity by SPAST increases as the number of glutamates per tubulin rises from one to eight, but decreases beyond this glutamylation threshold. Glutamylation is also involved in cilia motility. Post-translationally, some glutamate residues at the C-terminus are monoglycylated but not polyglycylated due to the absence of functional TTLL10 in human. Monoglycylation is mainly limited to tubulin incorporated into cilia and flagella axonemes, which is required for their stability and maintenance. Flagella glycylation controls sperm motility. Both polyglutamylation and monoglycylation can coexist on the same protein on adjacent residues, and lowering glycylation levels increases polyglutamylation, and reciprocally. Acetylation of alpha chains at Lys-40 is located inside the microtubule lumen. This modification has been correlated with increased microtubule stability, intracellular transport and ciliary assembly. In terms of processing, methylation of alpha chains at Lys-40 is found in mitotic microtubules and is required for normal mitosis and cytokinesis contributing to genomic stability. Post-translationally, nitration of Tyr-451 is irreversible and interferes with normal dynein intracellular distribution. Undergoes a tyrosination/detyrosination cycle, the cyclic removal and re-addition of a C-terminal tyrosine residue by the enzymes tubulin tyrosine carboxypeptidase (MATCAP1/KIAA0895L, VASH1 or VASH2) and tubulin tyrosine ligase (TTL), respectively. In terms of processing, tyrosination promotes microtubule interaction with CAP-Gly domain-containing proteins such as CLIP1, CLIP2 and DCTN1. Tyrosination regulates the initiation of dynein-dynactin motility via interaction with DCTN1, which brings the dynein-dynactin complex into contact with microtubules. In neurons, tyrosinated tubulins mediate the initiation of retrograde vesicle transport. Post-translationally, detyrosination is involved in metaphase plate congression by guiding chromosomes during mitosis: detyrosination promotes interaction with CENPE, promoting pole-proximal transport of chromosomes toward the equator. Detyrosination increases microtubules-dependent mechanotransduction in dystrophic cardiac and skeletal muscle. In cardiomyocytes, detyrosinated microtubules are required to resist to contractile compression during contraction: detyrosination promotes association with desmin (DES) at force-generating sarcomeres, leading to buckled microtubules and mechanical resistance to contraction.

It is found in the cytoplasm. The protein resides in the cytoskeleton. The enzyme catalyses GTP + H2O = GDP + phosphate + H(+). In terms of biological role, tubulin is the major constituent of microtubules, protein filaments consisting of alpha- and beta-tubulin heterodimers. Microtubules grow by the addition of GTP-tubulin dimers to the microtubule end, where a stabilizing cap forms. Below the cap, tubulin dimers are in GDP-bound state, owing to GTPase activity of alpha-tubulin. The protein is Tubulin alpha-1B chain (TUBA1B) of Homo sapiens (Human).